Reading from the N-terminus, the 1050-residue chain is Sucrose-phosphate synthase 4 (1050 aa).

Residues 134–167 (QGRNDAEEDLLSELSEGEKDKNDGEKEKSEVVTT) form a disordered region. At Ser-148 the chain carries Phosphoserine. The span at 149 to 163 (EGEKDKNDGEKEKSE) shows a compositional bias: basic and acidic residues. A Phosphoserine modification is found at Ser-180.

It belongs to the glycosyltransferase 1 family. In terms of assembly, homodimer or homotetramer.

The catalysed reaction is beta-D-fructose 6-phosphate + UDP-alpha-D-glucose = sucrose 6(F)-phosphate + UDP + H(+). Its pathway is glycan biosynthesis; sucrose biosynthesis; sucrose from D-fructose 6-phosphate and UDP-alpha-D-glucose: step 1/2. Its activity is regulated as follows. Activity is regulated by phosphorylation and moderated by concentration of metabolites and light. In terms of biological role, plays a role in photosynthetic sucrose synthesis by catalyzing the rate-limiting step of sucrose biosynthesis from UDP-glucose and fructose- 6-phosphate. Involved in the regulation of carbon partitioning in the leaves of plants. May regulate the synthesis of sucrose and therefore play a major role as a limiting factor in the export of photoassimilates out of the leaf. Plays a role for sucrose availability that is essential for plant growth and fiber elongation. The protein is Sucrose-phosphate synthase 4 of Arabidopsis thaliana (Mouse-ear cress).